Consider the following 117-residue polypeptide: Probable non-functional immunoglobulinn kappa variable 1-37 (117 aa).

Residues 1-22 (MDMRVPAQLLGLLLLWVPGARC) form the signal peptide. The Ig-like domain maps to 24-117 (IQLTQSPSSL…YYGQRTYNAP (94 aa)).

In terms of assembly, most probably, the immunoglobulin is not assembled due to incorrect folding of light chain. Immunoglobulins are composed of two identical heavy chains and two identical light chains; disulfide-linked.

It localises to the secreted. The protein localises to the cell membrane. Its function is as follows. Probable non-functional open reading frame (ORF) of V region of the variable domain of immunoglobulin light chains. Non-functional ORF generally cannot participate in the synthesis of a productive immunoglobulin chain due to altered V-(D)-J or switch recombination and/or splicing site (at mRNA level) and/or conserved amino acid change (protein level). Immunoglobulins, also known as antibodies, are membrane-bound or secreted glycoproteins produced by B lymphocytes. In the recognition phase of humoral immunity, the membrane-bound immunoglobulins serve as receptors which, upon binding of a specific antigen, trigger the clonal expansion and differentiation of B lymphocytes into immunoglobulins-secreting plasma cells. Secreted immunoglobulins mediate the effector phase of humoral immunity, which results in the elimination of bound antigens. The antigen binding site is formed by the variable domain of one heavy chain, together with that of its associated light chain. Thus, each immunoglobulin has two antigen binding sites with remarkable affinity for a particular antigen. The variable domains are assembled by a process called V-(D)-J rearrangement and can then be subjected to somatic hypermutations which, after exposure to antigen and selection, allow affinity maturation for a particular antigen. In Homo sapiens (Human), this protein is Probable non-functional immunoglobulinn kappa variable 1-37.